The following is a 169-amino-acid chain: Protein pid-1 (169 aa).

Positions 137-151 (SGSPRITPQKHTPVS) are enriched in polar residues. Residues 137–169 (SGSPRITPQKHTPVSANHKPARSIFDDIPSNIA) form a disordered region.

In terms of assembly, component of the pid-1 variant of the PETISCO complex (also called the pid-3, erh-2, tofu-6, and ife-3 small RNA complex) containing at least pid-1, tofu-6, ife-3, pid-3, and erh-2, which is required for the biogenesis of a class of 21 nucleotide PIWI-interacting RNAs (piRNAs) that possess a uracil residue at the 5'-end (also called 21U-RNAs). Within the complex interacts with pid-3; the interaction is direct. Within the complex interacts with erh-2. Within the complex interacts with tofu-6. In terms of tissue distribution, expressed predominantly in the germline (at protein level).

The protein resides in the cytoplasm. It localises to the nucleus. The protein localises to the perinuclear region. In terms of biological role, component of the pid-1 variant of the PETISCO complex which is required for the biogenesis of a class of 21 nucleotide PIWI-interacting RNAs (piRNAs) that possess a uracil residue at the 5'-end (also called 21U-RNAs). Within the complex acts as an adapter which binds to the complex via erh-2. Involved in the biogenesis of 21U-RNAs which guide the piwi protein prg-1 to its DNA targets for silencing. Plays a role in small RNA-directed transgenerational epigenetic inheritance. This chain is Protein pid-1, found in Caenorhabditis elegans.